The sequence spans 343 residues: Signal peptide peptidase 2 (343 aa).

The Lumenal portion of the chain corresponds to methionine 1–proline 19. The chain crosses the membrane as a helical span at residues leucine 20–valine 40. Residues glycine 41–arginine 62 lie on the Cytoplasmic side of the membrane. A helical transmembrane segment spans residues phenylalanine 63–lysine 83. Residues aspartate 84–valine 89 are Lumenal-facing. Residues leucine 90–isoleucine 110 traverse the membrane as a helical segment. At lysine 111–glutamine 141 the chain is on the cytoplasmic side. A helical membrane pass occupies residues valine 142–leucine 162. Residues alanine 163–asparagine 165 lie on the Lumenal side of the membrane. The helical transmembrane segment at valine 166–threonine 186 threads the bilayer. The Cytoplasmic portion of the chain corresponds to glycine 187–alanine 188. A helical transmembrane segment spans residues isoleucine 189–valine 209. Aspartate 198 is a catalytic residue. Residues serine 210–arginine 230 lie on the Lumenal side of the membrane. Residues proline 231–leucine 251 traverse the membrane as a helical segment. Aspartate 239 is an active-site residue. Residues arginine 252–serine 266 lie on the Cytoplasmic side of the membrane. A helical membrane pass occupies residues alanine 267–alanine 287. Topologically, residues alanine 288–proline 290 are lumenal. The short motif at proline 290–leucine 292 is the PAL element. Residues alanine 291–glycine 311 traverse the membrane as a helical segment. Over glutamate 312–glutamate 343 the chain is Cytoplasmic. Residues alanine 324 to threonine 334 are compositionally biased toward acidic residues. A disordered region spans residues alanine 324 to glutamate 343. The short motif at lysine 340–glutamate 343 is the Endoplasmic reticulum targeting signal element.

Belongs to the peptidase A22B family. In terms of tissue distribution, ubiquitous.

The protein localises to the endoplasmic reticulum membrane. Its function is as follows. Intramembrane-cleaving aspartic protease (I-CLiP) that cleaves type II membrane signal peptides in the hydrophobic plane of the membrane. Catalyzes intramembrane proteolysis of some signal peptides after they have been cleaved from a preprotein, resulting in the release of the fragment from the ER membrane into the cytoplasm. The sequence is that of Signal peptide peptidase 2 (SPP2) from Oryza sativa subsp. japonica (Rice).